We begin with the raw amino-acid sequence, 647 residues long: Methyl-accepting chemotaxis protein McpK (647 aa).

The Cytoplasmic segment spans residues 1–16 (MYDWWVLQLAKLSVSR). A helical membrane pass occupies residues 17–37 (KLMVGFGVLLALLLLVVISSN). Residues 38–291 (RTLTHQTALS…LRESTASRDR (254 aa)) are Periplasmic-facing. The region spanning 45–287 (ALSEQLAEVA…AGRQLRESTA (243 aa)) is the HBM domain. The helical transmembrane segment at 292–312 (ASLWLIAALALAFGCVAGWAI) threads the bilayer. The Cytoplasmic segment spans residues 313–647 (NRQIVRPLDE…LQAQVGRFRL (335 aa)). Residues 314 to 370 (RQIVRPLDEALAQAEAIAAGDLGKRPQNPLTLQRRDELGQLQRVMQRMGDSLRELVG) enclose the HAMP domain. Residues 375-611 (GVSQLASSAE…EINRSVLSVR (237 aa)) form the Methyl-accepting transducer domain.

The protein belongs to the methyl-accepting chemotaxis (MCP) protein family. In terms of assembly, ligand free ligand-binding domain (LBD) is present in a monomer-dimer equilibrium. AlphaKG binding stabilizes the homodimer.

The protein localises to the cell inner membrane. Chemotactic-signal transducers respond to changes in the concentration of attractants and repellents in the environment, transduce a signal from the outside to the inside of the cell, and facilitate sensory adaptation through the variation of the level of methylation. McpK is a chemoreceptor that specifically binds and mediates chemotaxis to alpha-ketoglutarate (alphaKG). This Pseudomonas aeruginosa (strain ATCC 15692 / DSM 22644 / CIP 104116 / JCM 14847 / LMG 12228 / 1C / PRS 101 / PAO1) protein is Methyl-accepting chemotaxis protein McpK.